Consider the following 291-residue polypeptide: 4-hydroxy-tetrahydrodipicolinate synthase (291 aa).

Threonine 45 serves as a coordination point for pyruvate. Catalysis depends on tyrosine 131, which acts as the Proton donor/acceptor. The active-site Schiff-base intermediate with substrate is the lysine 159. Isoleucine 202 contributes to the pyruvate binding site.

Belongs to the DapA family. Homotetramer; dimer of dimers.

Its subcellular location is the cytoplasm. It carries out the reaction L-aspartate 4-semialdehyde + pyruvate = (2S,4S)-4-hydroxy-2,3,4,5-tetrahydrodipicolinate + H2O + H(+). Its pathway is amino-acid biosynthesis; L-lysine biosynthesis via DAP pathway; (S)-tetrahydrodipicolinate from L-aspartate: step 3/4. Catalyzes the condensation of (S)-aspartate-beta-semialdehyde [(S)-ASA] and pyruvate to 4-hydroxy-tetrahydrodipicolinate (HTPA). The sequence is that of 4-hydroxy-tetrahydrodipicolinate synthase from Methanosarcina acetivorans (strain ATCC 35395 / DSM 2834 / JCM 12185 / C2A).